We begin with the raw amino-acid sequence, 214 residues long: Glutathione S-transferase 1 (214 aa).

Residues 2–83 (APMKLYGAVM…YAARKNKPEL (82 aa)) enclose the GST N-terminal domain. Residues Ser-12, 41–42 (HK), 54–55 (QV), and 67–68 (ES) contribute to the glutathione site. Residues 88–214 (NLEEAAMVDV…KVAALMKPSA (127 aa)) enclose the GST C-terminal domain.

Belongs to the GST superfamily. Phi family. Homodimer or heterodimer of GST-I and GST-IV (=GST-II). As to expression, expressed in the stem and leaves, lower levels are seen in the pollen and endosperm.

It carries out the reaction RX + glutathione = an S-substituted glutathione + a halide anion + H(+). In terms of biological role, conjugation of reduced glutathione to a wide number of exogenous and endogenous hydrophobic electrophiles. Involved in the detoxification of certain herbicides. The chain is Glutathione S-transferase 1 (GST1) from Zea mays (Maize).